The sequence spans 570 residues: Proline--tRNA ligase (570 aa).

This sequence belongs to the class-II aminoacyl-tRNA synthetase family. ProS type 1 subfamily. In terms of assembly, homodimer.

The protein localises to the cytoplasm. The catalysed reaction is tRNA(Pro) + L-proline + ATP = L-prolyl-tRNA(Pro) + AMP + diphosphate. Its function is as follows. Catalyzes the attachment of proline to tRNA(Pro) in a two-step reaction: proline is first activated by ATP to form Pro-AMP and then transferred to the acceptor end of tRNA(Pro). As ProRS can inadvertently accommodate and process non-cognate amino acids such as alanine and cysteine, to avoid such errors it has two additional distinct editing activities against alanine. One activity is designated as 'pretransfer' editing and involves the tRNA(Pro)-independent hydrolysis of activated Ala-AMP. The other activity is designated 'posttransfer' editing and involves deacylation of mischarged Ala-tRNA(Pro). The misacylated Cys-tRNA(Pro) is not edited by ProRS. This Shewanella sp. (strain MR-4) protein is Proline--tRNA ligase.